The following is an 808-amino-acid chain: Potassium transporter 5 (808 aa).

Topologically, residues 1-65 (MAEEVGETRG…NQVNWKKTLS (65 aa)) are cytoplasmic. Residues 66 to 86 (LTFQSIGVVYGDIGTSPLYVY) traverse the membrane as a helical segment. Residues 87–102 (ESTFPDKIGSKEDILG) lie on the Extracellular side of the membrane. Residues 103–123 (VLSLIIYTLVLLPMLKYVFIV) form a helical membrane-spanning segment. Topologically, residues 124 to 189 (LRANDNGDGG…EKMENSKNIK (66 aa)) are cytoplasmic. A helical transmembrane segment spans residues 190–210 (ILLFLVTILGTSMVIGDGVLT). Over 211-221 (PCISVLSAVSG) the chain is Extracellular. The helical transmembrane segment at 222–242 (IGSLGQDAVVGISIAILIVLF) threads the bilayer. The Cytoplasmic segment spans residues 243–251 (CAQRLGTDK). Residues 252–272 (VGFSFAPIILLWFSFIGGIGL) form a helical membrane-spanning segment. Over 273-302 (YNLFKYDVSVLRAFNPKYMFDYFKRNGKQG) the chain is Extracellular. Residues 303–323 (WISLGGVVLAVTGTEAMFADL) traverse the membrane as a helical segment. The Cytoplasmic portion of the chain corresponds to 324 to 327 (GHFN). Residues 328–348 (VQAIQISFSGIVFPALLCAYA) traverse the membrane as a helical segment. At 349 to 379 (GQAAYLTKFPDDVSKTFYKSIPDPLYWPTFV) the chain is on the extracellular side. Residues 380-400 (VAVAAAIIASQAMISGAFAII) traverse the membrane as a helical segment. Over 401–424 (SQSLSLGCFPRVKVIHTSAKYEGQ) the chain is Cytoplasmic. Residues 425-445 (VYIPEVNYILMIACIMVCLGF) form a helical membrane-spanning segment. At 446-456 (KTTEKIGNAYG) the chain is on the extracellular side. The helical transmembrane segment at 457-477 (IAVVAVMVITTCMVTIIMLVV) threads the bilayer. The Cytoplasmic segment spans residues 478 to 482 (WRTKM). A helical membrane pass occupies residues 483–503 (IWIAFFFFGFICIEAVYLSSV). Topologically, residues 504 to 510 (LYKFKDG) are extracellular. Residues 511 to 531 (GFLPLAFSFFLMIIMGIWHYI) form a helical membrane-spanning segment. Topologically, residues 532-808 (HKERYMYELK…LLRVGMTYEI (277 aa)) are cytoplasmic. The tract at residues 699 to 722 (LQQPNPSRVSSGSIHSNSGIKSTK) is disordered.

Belongs to the HAK/KUP transporter (TC 2.A.72.3) family. As to expression, expressed in the roots.

It localises to the cell membrane. The catalysed reaction is K(+)(in) = K(+)(out). Functionally, high-affinity potassium transporter that functions under low potassium conditions. Involved in the positive regulation of salt tolerance under salt stress. This Manihot esculenta (Cassava) protein is Potassium transporter 5.